The chain runs to 462 residues: Argininosuccinate lyase (462 aa).

It belongs to the lyase 1 family. Argininosuccinate lyase subfamily.

It is found in the cytoplasm. It carries out the reaction 2-(N(omega)-L-arginino)succinate = fumarate + L-arginine. It functions in the pathway amino-acid biosynthesis; L-arginine biosynthesis; L-arginine from L-ornithine and carbamoyl phosphate: step 3/3. In Xanthobacter autotrophicus (strain ATCC BAA-1158 / Py2), this protein is Argininosuccinate lyase.